The chain runs to 175 residues: Large ribosomal subunit protein uL10 (175 aa).

The protein belongs to the universal ribosomal protein uL10 family. In terms of assembly, part of the ribosomal stalk of the 50S ribosomal subunit. The N-terminus interacts with L11 and the large rRNA to form the base of the stalk. The C-terminus forms an elongated spine to which L12 dimers bind in a sequential fashion forming a multimeric L10(L12)X complex.

In terms of biological role, forms part of the ribosomal stalk, playing a central role in the interaction of the ribosome with GTP-bound translation factors. This Cupriavidus taiwanensis (strain DSM 17343 / BCRC 17206 / CCUG 44338 / CIP 107171 / LMG 19424 / R1) (Ralstonia taiwanensis (strain LMG 19424)) protein is Large ribosomal subunit protein uL10.